The following is a 524-amino-acid chain: Beta-glucosidase 22 (524 aa).

A signal peptide spans 1–24 (MALQKFPLLGLLFLITIVVSSTIA). Residue glutamine 55 coordinates a beta-D-glucoside. N-linked (GlcNAc...) asparagine glycosylation is present at asparagine 61. Residues histidine 158 and 203 to 204 (NE) contribute to the a beta-D-glucoside site. Glutamate 204 (proton donor) is an active-site residue. Cysteine 223 and cysteine 230 are joined by a disulfide. A beta-D-glucoside is bound by residues tyrosine 346, glutamate 418, tryptophan 468, 475–476 (EW), and phenylalanine 484. Glutamate 418 acts as the Nucleophile in catalysis. An N-linked (GlcNAc...) asparagine glycan is attached at asparagine 494. A Prevents secretion from ER motif is present at residues 521–524 (KDEL).

This sequence belongs to the glycosyl hydrolase 1 family. As to quaternary structure, component of the PYK10 complex, at least composed of PYK10/BGLU23, BGLU21, BGLU22, JAL22, JAL23, PBP1/JAL30, PBP2/JAL31, JAL32, JAL33, JAL34, JAL35, GLL22 and GLL23. Expressed exclusively in roots.

The protein localises to the endoplasmic reticulum lumen. It catalyses the reaction Hydrolysis of terminal, non-reducing beta-D-glucosyl residues with release of beta-D-glucose.. Its activity is regulated as follows. Activated upon binding to PBP1 or PBP2. Beta-D-glucosidase active on scopolin &gt;&gt; esculin &gt;&gt; 4-MU-glucoside. No activity with DIMBOA-glucoside, pNP-glucoside, oNP-glucoside and sinigrin as substrates. In Arabidopsis thaliana (Mouse-ear cress), this protein is Beta-glucosidase 22.